The chain runs to 894 residues: Exocyst complex component 1 (894 aa).

Coiled coils occupy residues 152 to 199 (GDEE…LQVL) and 205 to 259 (QSIM…NHLI). The disordered stretch occupies residues 437–495 (SKESKKFATLPRKESAVKQETESLHGSSGKLTGSTSSLNKLSVQSSGSRRSQSSSLLDM). Residues 438–459 (KESKKFATLPRKESAVKQETES) show a composition bias toward basic and acidic residues. Positions 460–491 (LHGSSGKLTGSTSSLNKLSVQSSGSRRSQSSS) are enriched in low complexity. Position 470 is a phosphoserine (serine 470). Threonine 471 is modified (phosphothreonine). A phosphoserine mark is found at serine 473, serine 487, and serine 501.

This sequence belongs to the SEC3 family. The exocyst complex is composed of EXOC1, EXOC2, EXOC3, EXOC4, EXOC5, EXOC6, EXOC7 and EXOC8. Interacts with EEF1A1. Interacts with SLC6A9; interaction increases the transporter capacity of SLC6A9 probably by promoting its insertion into the cell membrane.

The protein localises to the midbody. It localises to the midbody ring. The protein resides in the cytoplasm. Its subcellular location is the perinuclear region. It is found in the cell membrane. In terms of biological role, component of the exocyst complex involved in the docking of exocytic vesicles with fusion sites on the plasma membrane. This Mus musculus (Mouse) protein is Exocyst complex component 1 (Exoc1).